A 63-amino-acid chain; its full sequence is Prokaryotic ubiquitin-like protein Pup (63 aa).

Positions 1-28 (MPQEFEQIRSADQPLDSEESAPVAGART) are disordered. The tract at residues 19-57 (ESAPVAGARTDDTVDALDAVLDDIESVLETNAEEYVGSF) is ARC ATPase binding. Glutamate 63 participates in a covalent cross-link: Isoglutamyl lysine isopeptide (Glu-Lys) (interchain with K-? in acceptor proteins).

It belongs to the prokaryotic ubiquitin-like protein family. As to quaternary structure, strongly interacts with the proteasome-associated ATPase ARC through a hydrophobic interface; the interacting region of Pup lies in its C-terminal half. There is one Pup binding site per ARC hexamer ring.

Its pathway is protein degradation; proteasomal Pup-dependent pathway. Its function is as follows. Protein modifier that is covalently attached to lysine residues of substrate proteins, thereby targeting them for proteasomal degradation. The tagging system is termed pupylation. The polypeptide is Prokaryotic ubiquitin-like protein Pup (Bifidobacterium dentium (strain ATCC 27534 / DSM 20436 / JCM 1195 / Bd1)).